The following is a 454-amino-acid chain: Uridine kinase (454 aa).

28–35 lines the ATP pocket; that stretch reads GPSGSGKT.

It belongs to the uridine kinase family.

The protein resides in the cytoplasm. The protein localises to the nucleus. The catalysed reaction is uridine + ATP = UMP + ADP + H(+). It carries out the reaction cytidine + ATP = CMP + ADP + H(+). It participates in pyrimidine metabolism; CTP biosynthesis via salvage pathway; CTP from cytidine: step 1/3. It functions in the pathway pyrimidine metabolism; UMP biosynthesis via salvage pathway; UMP from uridine: step 1/1. In terms of biological role, catalyzes the conversion of uridine into UMP and cytidine into CMP in the pyrimidine salvage pathway. The polypeptide is Uridine kinase (urk1) (Schizosaccharomyces pombe (strain 972 / ATCC 24843) (Fission yeast)).